Consider the following 156-residue polypeptide: Riboflavin synthase (156 aa).

The protein belongs to the DMRL synthase family.

It carries out the reaction 2 6,7-dimethyl-8-(1-D-ribityl)lumazine + H(+) = 5-amino-6-(D-ribitylamino)uracil + riboflavin. It participates in cofactor biosynthesis; riboflavin biosynthesis; riboflavin from 2-hydroxy-3-oxobutyl phosphate and 5-amino-6-(D-ribitylamino)uracil: step 2/2. In Methanocaldococcus jannaschii (strain ATCC 43067 / DSM 2661 / JAL-1 / JCM 10045 / NBRC 100440) (Methanococcus jannaschii), this protein is Riboflavin synthase (ribC).